Here is a 451-residue protein sequence, read N- to C-terminus: Probable V-type proton ATPase subunit H 1 (451 aa).

The protein belongs to the V-ATPase H subunit family. In terms of assembly, V-ATPase is a heteromultimeric enzyme made up of two complexes: the ATP-hydrolytic V1 complex and the proton translocation V0 complex. The V1 complex consists of three catalytic AB heterodimers that form a heterohexamer, three peripheral stalks each consisting of EG heterodimers, one central rotor including subunits D and F, and the regulatory subunits C and H. The proton translocation complex V0 consists of the proton transport subunit a, a ring of proteolipid subunits c9c'', rotary subunit d, subunits e and f, and the accessory subunits vah-19/Ac45 and vah-20/PRR.

Functionally, subunit of the V1 complex of vacuolar(H+)-ATPase (V-ATPase), a multisubunit enzyme composed of a peripheral complex (V1) that hydrolyzes ATP and a membrane integral complex (V0) that translocates protons. V-ATPase is responsible for acidifying and maintaining the pH of intracellular compartments and in some cell types, is targeted to the plasma membrane, where it is responsible for acidifying the extracellular environment. Subunit H is essential for V-ATPase activity, but not for the assembly of the complex. The polypeptide is Probable V-type proton ATPase subunit H 1 (Caenorhabditis elegans).